Reading from the N-terminus, the 483-residue chain is Probable zinc metalloprotease PTT_08196 (483 aa).

A signal peptide spans 1–18 (MLFRSVILSNALLLPACA). Asn-96 and Asn-121 each carry an N-linked (GlcNAc...) asparagine glycan. Residues His-167, Asp-187, and Glu-220 each coordinate Zn(2+). Asn-235 carries N-linked (GlcNAc...) asparagine glycosylation. A Zn(2+)-binding site is contributed by Asp-247. N-linked (GlcNAc...) asparagine glycans are attached at residues Asn-310, Asn-362, Asn-401, Asn-411, and Asn-421. One can recognise a Fibronectin type-III domain in the interval 396–483 (PAMPRNVTID…KSPAVYPFPA (88 aa)).

Belongs to the peptidase M28 family. M28B subfamily. It depends on Zn(2+) as a cofactor.

It localises to the secreted. This Pyrenophora teres f. teres (strain 0-1) (Barley net blotch fungus) protein is Probable zinc metalloprotease PTT_08196.